The following is a 73-amino-acid chain: Translation initiation factor IF-1 3 (73 aa).

The S1-like domain occupies 1–72 (MAKEELVEFG…TKGRINYRHK (72 aa)).

This sequence belongs to the IF-1 family. In terms of assembly, component of the 30S ribosomal translation pre-initiation complex which assembles on the 30S ribosome in the order IF-2 and IF-3, IF-1 and N-formylmethionyl-tRNA(fMet); mRNA recruitment can occur at any time during PIC assembly.

It localises to the cytoplasm. Its function is as follows. One of the essential components for the initiation of protein synthesis. Stabilizes the binding of IF-2 and IF-3 on the 30S subunit to which N-formylmethionyl-tRNA(fMet) subsequently binds. Helps modulate mRNA selection, yielding the 30S pre-initiation complex (PIC). Upon addition of the 50S ribosomal subunit IF-1, IF-2 and IF-3 are released leaving the mature 70S translation initiation complex. The polypeptide is Translation initiation factor IF-1 3 (Cupriavidus pinatubonensis (strain JMP 134 / LMG 1197) (Cupriavidus necator (strain JMP 134))).